A 309-amino-acid polypeptide reads, in one-letter code: Anamorsin homolog (309 aa).

The N-terminal SAM-like domain stretch occupies residues 4-169; it reads VSPGHSVLLL…SYEVGSSAQL (166 aa). The interval 170–218 is linker; that stretch reads TLSFAKKKQVEKPKLDENTAKIWSLSAVDMNDDDIDLLDPDELLDEEDL. Positions 230, 242, 245, and 247 each coordinate [2Fe-2S] cluster. A fe-S binding site A region spans residues 230–247; sequence CGTGGDTKKRKACKNCTC. [4Fe-4S] cluster contacts are provided by C270, C273, C281, and C284. 2 short sequence motifs (cx2C motif) span residues 270-273 and 281-284; these read CGNC and CASC. The interval 270 to 284 is fe-S binding site B; that stretch reads CGNCYLGDAFRCASC.

The protein belongs to the anamorsin family. In terms of assembly, monomer. [2Fe-2S] cluster is required as a cofactor. [4Fe-4S] cluster serves as cofactor.

The protein localises to the cytoplasm. The protein resides in the mitochondrion intermembrane space. Component of the cytosolic iron-sulfur (Fe-S) protein assembly (CIA) machinery. Required for the maturation of extramitochondrial Fe-S proteins. Part of an electron transfer chain functioning in an early step of cytosolic Fe-S biogenesis, facilitating the de novo assembly of a [4Fe-4S] cluster on the cytosolic Fe-S scaffold complex. Electrons are transferred from NADPH via a FAD- and FMN-containing diflavin oxidoreductase. Together with the diflavin oxidoreductase, also required for the assembly of the diferric tyrosyl radical cofactor of ribonucleotide reductase (RNR), probably by providing electrons for reduction during radical cofactor maturation in the catalytic small subunit. This chain is Anamorsin homolog, found in Branchiostoma floridae (Florida lancelet).